Here is a 788-residue protein sequence, read N- to C-terminus: DNA ligase (788 aa).

NAD(+) is bound by residues 35-39 (DAEYD), 84-85 (SL), and glutamate 124. Lysine 126 acts as the N6-AMP-lysine intermediate in catalysis. NAD(+)-binding residues include arginine 147, glutamate 184, lysine 300, and lysine 324. Positions 418, 421, 448, and 454 each coordinate Zn(2+). The BRCT domain occupies 707-788 (AEGLPLAGQT…FIERLAQLGS (82 aa)).

The protein belongs to the NAD-dependent DNA ligase family. LigA subfamily. The cofactor is Mg(2+). Mn(2+) is required as a cofactor.

It carries out the reaction NAD(+) + (deoxyribonucleotide)n-3'-hydroxyl + 5'-phospho-(deoxyribonucleotide)m = (deoxyribonucleotide)n+m + AMP + beta-nicotinamide D-nucleotide.. Its function is as follows. DNA ligase that catalyzes the formation of phosphodiester linkages between 5'-phosphoryl and 3'-hydroxyl groups in double-stranded DNA using NAD as a coenzyme and as the energy source for the reaction. It is essential for DNA replication and repair of damaged DNA. The chain is DNA ligase from Stutzerimonas stutzeri (strain A1501) (Pseudomonas stutzeri).